The following is a 235-amino-acid chain: 7-cyano-7-deazaguanine synthase (235 aa).

11 to 21 (FSGGQDSTTCV) is an ATP binding site. Zn(2+) is bound by residues Cys199, Cys214, Cys217, and Cys220.

The protein belongs to the QueC family. Zn(2+) serves as cofactor.

The catalysed reaction is 7-carboxy-7-deazaguanine + NH4(+) + ATP = 7-cyano-7-deazaguanine + ADP + phosphate + H2O + H(+). It functions in the pathway purine metabolism; 7-cyano-7-deazaguanine biosynthesis. Functionally, catalyzes the ATP-dependent conversion of 7-carboxy-7-deazaguanine (CDG) to 7-cyano-7-deazaguanine (preQ(0)). The polypeptide is 7-cyano-7-deazaguanine synthase (Janthinobacterium sp. (strain Marseille) (Minibacterium massiliensis)).